Reading from the N-terminus, the 349-residue chain is GDSL esterase/lipase At2g19060 (349 aa).

The signal sequence occupies residues 1 to 25; it reads MADKMFKALLWAFATAVVMAEAVRG. Serine 37 functions as the Nucleophile in the catalytic mechanism. A glycan (N-linked (GlcNAc...) asparagine) is linked at asparagine 178. Catalysis depends on residues aspartate 317 and histidine 320.

Belongs to the 'GDSL' lipolytic enzyme family.

Its subcellular location is the secreted. This is GDSL esterase/lipase At2g19060 from Arabidopsis thaliana (Mouse-ear cress).